The following is a 170-amino-acid chain: Phosphopantetheine adenylyltransferase (170 aa).

Serine 14 provides a ligand contact to substrate. ATP is bound by residues 14 to 15 (SF) and histidine 22. Substrate-binding residues include lysine 46, leucine 79, and arginine 93. ATP contacts are provided by residues 94 to 96 (GIR), glutamate 104, and 129 to 135 (IAEVSST).

Belongs to the bacterial CoaD family. In terms of assembly, homohexamer. Mg(2+) serves as cofactor.

Its subcellular location is the cytoplasm. It carries out the reaction (R)-4'-phosphopantetheine + ATP + H(+) = 3'-dephospho-CoA + diphosphate. It participates in cofactor biosynthesis; coenzyme A biosynthesis; CoA from (R)-pantothenate: step 4/5. In terms of biological role, reversibly transfers an adenylyl group from ATP to 4'-phosphopantetheine, yielding dephospho-CoA (dPCoA) and pyrophosphate. In Neisseria meningitidis serogroup C (strain 053442), this protein is Phosphopantetheine adenylyltransferase.